A 1485-amino-acid polypeptide reads, in one-letter code: DNA topoisomerase 2 (1485 aa).

Residues 1 to 16 show a composition bias toward acidic residues; it reads MSIDADFSDYEDEASG. The interval 1–76 is disordered; that stretch reads MSIDADFSDY…NGNGNSNVST (76 aa). Residues 46–59 are compositionally biased toward polar residues; the sequence is DLRQTSLTSMTASE. Low complexity predominate over residues 64-76; sequence VTNNGNGNSNVST. ATP contacts are provided by residues Asn136, Asn165, 193-195, and 206-213; these read SSN and GRNGYGAK. The interval 388-392 is interaction with DNA; that stretch reads KKENK. 421–423 lines the ATP pocket; it reads QTK. One can recognise a Toprim domain in the interval 499 to 613; the sequence is CVLILTEGDS…SLLQIPGFLI (115 aa). Mg(2+) is bound by residues Glu505, Asp582, and Asp584. Residues 745–1195 enclose the Topo IIA-type catalytic domain; that stretch reads IPSVVDGLKP…TPKELWLHDL (451 aa). Tyr835 functions as the O-(5'-phospho-DNA)-tyrosine intermediate in the catalytic mechanism. Residues 1019–1028 form an interaction with DNA region; it reads KLSRTQATSN. A compositionally biased stretch (basic and acidic residues) spans 1216–1225; that stretch reads EEQSSRDFVN. A disordered region spans residues 1216 to 1485; sequence EEQSSRDFVN…EDVDDYDESD (270 aa). Positions 1226 to 1242 are enriched in basic residues; that stretch reads RTKKKPRGKSTGTRKPR. Polar residues predominate over residues 1260–1273; sequence ESKPSTTNRKQQTL. The segment covering 1278-1307 has biased composition (basic and acidic residues); that stretch reads ASKEPEKSSDINIVKTEDNSHGLSVEENRI. A phosphoserine mark is found at Ser1310 and Ser1345. Residues 1387–1396 are compositionally biased toward basic residues; the sequence is AKNKGKKASS. Positions 1413–1425 are enriched in polar residues; sequence GSSSTPKASSTNA. Residue Ser1433 is modified to Phosphoserine. Positions 1473–1485 are enriched in acidic residues; sequence DNDEDVDDYDESD.

The protein belongs to the type II topoisomerase family. In terms of assembly, homodimer. Mg(2+) is required as a cofactor. Requires Mn(2+) as cofactor. It depends on Ca(2+) as a cofactor. Phosphorylated at multiple sites at both extremities of the protein.

It is found in the nucleus. It carries out the reaction ATP-dependent breakage, passage and rejoining of double-stranded DNA.. Its function is as follows. Control of topological states of DNA by transient breakage and subsequent rejoining of DNA strands. Topoisomerase II makes double-strand breaks. The protein is DNA topoisomerase 2 (top2) of Schizosaccharomyces pombe (strain 972 / ATCC 24843) (Fission yeast).